A 173-amino-acid chain; its full sequence is Propanediol dehydratase small subunit (173 aa).

It belongs to the diol/glycerol dehydratase small subunit family. In terms of assembly, the propanediol dehydratase enzyme is a heterotrimeric complex composed of a large (PduC), a medium (PduD) and a small (PduE) subunit. The cofactor is adenosylcob(III)alamin.

It is found in the bacterial microcompartment. It carries out the reaction propane-1,2-diol = propanal + H2O. Its pathway is polyol metabolism; 1,2-propanediol degradation. Its activity is regulated as follows. Inhibited by glycerol. Functionally, part of the PduCDE complex that catalyzes the dehydration of 1,2-propanediol (1,2-PD) to propionaldehyde. Required for S.typhimurium growth on 1,2-PD as the sole carbon and energy source. Localized in the bacterial microcompartment (BMC) dedicated to 1,2-PD degradation. Its function is as follows. The 1,2-PD-specific bacterial microcompartment (BMC) concentrates low levels of 1,2-PD catabolic enzymes, concentrates volatile reaction intermediates thus enhancing pathway flux and keeps the level of toxic, mutagenic propionaldehyde low. This Salmonella typhimurium (strain LT2 / SGSC1412 / ATCC 700720) protein is Propanediol dehydratase small subunit.